The sequence spans 856 residues: Envelope glycoprotein GP350 (856 aa).

Residues 1 to 809 (MEAALLVCQY…TSQPRFSNLS (809 aa)) are Virion surface-facing. 27 N-linked (GlcNAc...) asparagine; by host glycosylation sites follow: N47, N87, N114, N166, N169, N195, N229, N277, N318, N328, N345, N356, N378, N386, N411, N435, N443, N457, N497, N519, N533, N554, N568, N582, N585, N603, and N614. The interval 421-779 (FSKAPESTTT…PPSTSSELRP (359 aa)) is disordered. Over residues 427-437 (STTTSPTSNTT) the composition is skewed to low complexity. A compositionally biased stretch (polar residues) spans 442–488 (PNTTTGLPSSTHVPTNLTAPASTGPTVSTADVTSPTPAGTTSGASPV). Residues 507 to 570 (TSPTPAVTTP…AVTTPTPNAT (64 aa)) show a composition bias toward low complexity. Polar residues predominate over residues 575–616 (GETSPQANTTNHTLGGTSSTPVVTSQPKNATSAVTTGQHNIT). Positions 617 to 631 (SSSTSSMSLRPSSIS) are enriched in low complexity. The N-linked (GlcNAc...) asparagine; by host glycan is linked to N650. Residues 654 to 669 (VTPASTSTHHVSTSSP) show a composition bias toward low complexity. The span at 674–690 (GTTSQASGPGNSSTSTK) shows a compositional bias: polar residues. N-linked (GlcNAc...) asparagine; by host glycans are attached at residues N684, N695, N704, and N729. Polar residues predominate over residues 703 to 730 (KNATSPQAPSGQKTAVPTVTSTGGKANS). Residues 731–741 (TTGGKHTTGHG) are compositionally biased toward low complexity. The segment covering 743 to 776 (RTSTEPTTDYGGDSTTPRTRYNATTYLPPSTSSE) has biased composition (polar residues). N764 and N807 each carry an N-linked (GlcNAc...) asparagine; by host glycan. Residues 810 to 830 (MLVLQWASLAVLTLLLLLVMA) form a helical membrane-spanning segment. The Intravirion segment spans residues 831 to 856 (DCAFRRNLSTSHTYTTPPYDDAETYV).

Belongs to the Epstein-Barr GP350 family. Interacts with host CR2. In terms of processing, extensively glycosylated.

It localises to the virion membrane. It is found in the host membrane. Functionally, initiates virion attachment to host B-lymphocyte cell, leading to virus entry. Acts by binding to host CR2 at the surface of B-lymphocytes, facilitating the binding of viral glycoprotein gp42 to HLA class II molecules. Attachment triggers virion-host membrane fusion and invasion of the host cell. In Homo sapiens (Human), this protein is Envelope glycoprotein GP350.